A 247-amino-acid polypeptide reads, in one-letter code: PsbP domain-containing protein 3, chloroplastic (247 aa).

A chloroplast-targeting transit peptide spans 1–26 (MAAISPWLSSPQSFSNPRVTITDSRR). A thylakoid-targeting transit peptide spans 27–80 (CSSISAAISVLDSSNEEQHRISSRDHVGMKRRDVMLQIASSVFFLPLAISPAFA).

This sequence belongs to the PsbP family.

The protein localises to the plastid. The protein resides in the chloroplast thylakoid lumen. This is PsbP domain-containing protein 3, chloroplastic (PPD3) from Arabidopsis thaliana (Mouse-ear cress).